The following is a 548-amino-acid chain: MAMKIPKSGYNRFMKEGAQHFKGTDEAVQRNIEACTELASQIRSAYGPNGMNKMVINHIEKLFVTNDAATILKELEIQHPAARIIIMATEMQEKQIGDNTNTVVILAAALLEHAANLIHMGMTPQEVAAGYEQAAEKALEILPTLVVKEATDMKNIEEVRQYIRSAITSKQYDNEDIIADLVAKACVTTCPANSFNFNVDNIRICKIIGSGVHTSTVMNGMVFKRGAEGEIREARDARIAVYTCPFDLTQTETKGTVLIENADELRNFSKGEEAEVEEQVKAIADNGVKVVVAAGKFGDMYLHFLNKYKIMAVRLTSKFDLRRLCRTVGAQPQARICAPAVNLLGHCDSVAVQEIGDENVVVFDKKSETGKVATIIIRGSSQSRIDDVERAVDDAVNTYKALTKDGKLLAGAGAVEIELAKEIESFGAKAPGLEQYAIKKFAHALETLPKAIAENAGMPTTETLTKLYAEHVAGKKNAGIDIWKRETMDAVVNNIFDLYAGKRLAIKLATDAASTILKVDQIIMSKQATGGPKPRGPKAQDEDDDGMA.

Residues 527–548 are disordered; the sequence is QATGGPKPRGPKAQDEDDDGMA.

It belongs to the TCP-1 chaperonin family. As to quaternary structure, heterooligomeric complex.

The protein localises to the cytoplasm. In terms of biological role, molecular chaperone; assists the folding of proteins upon ATP hydrolysis. Known to play a role, in vitro, in the folding of actin and tubulin. Required for correct subcellular localization of pgl-1. This Caenorhabditis elegans protein is T-complex protein 1 subunit theta (cct-8).